Here is a 518-residue protein sequence, read N- to C-terminus: Arp2/3 complex-activating protein rickA (518 aa).

The segment at Ser310–Arg518 is disordered. 2 stretches are compositionally biased toward pro residues: residues Thr344 to Pro354 and Val382 to Val401. Positions Gln418–Lys430 are enriched in polar residues. The 18-residue stretch at Asp424 to Ile441 folds into the WH2 domain. Over residues Lys439–Ser461 the composition is skewed to basic and acidic residues. A compositionally biased stretch (polar residues) spans Gly488 to Ser498.

Homodimer.

The protein localises to the cell surface. Recruits and activates the Arp2/3 complex, which in turn leads to actin polymerization, promoting Rickettsia motility during infection. This chain is Arp2/3 complex-activating protein rickA (rickA), found in Rickettsia bellii (strain RML369-C).